The primary structure comprises 339 residues: F420-dependent glucose-6-phosphate dehydrogenase (339 aa).

A coenzyme F420-(gamma-Glu)n-binding site is contributed by aspartate 41. Histidine 42 acts as the Proton donor in catalysis. Residues threonine 78 and 109-110 (TG) each bind coenzyme F420-(gamma-Glu)n. Catalysis depends on glutamate 111, which acts as the Proton acceptor. Residues asparagine 114, 177–178 (SG), and 180–181 (AA) contribute to the coenzyme F420-(gamma-Glu)n site. Residues threonine 195, lysine 198, lysine 259, and arginine 283 each coordinate substrate.

The protein belongs to the F420-dependent glucose-6-phosphate dehydrogenase family. Homodimer.

It carries out the reaction oxidized coenzyme F420-(gamma-L-Glu)(n) + D-glucose 6-phosphate + H(+) = 6-phospho-D-glucono-1,5-lactone + reduced coenzyme F420-(gamma-L-Glu)(n). Functionally, catalyzes the coenzyme F420-dependent oxidation of glucose 6-phosphate (G6P) to 6-phosphogluconolactone. This Nakamurella multipartita (strain ATCC 700099 / DSM 44233 / CIP 104796 / JCM 9543 / NBRC 105858 / Y-104) (Microsphaera multipartita) protein is F420-dependent glucose-6-phosphate dehydrogenase.